Reading from the N-terminus, the 146-residue chain is uncharacterized protein (146 aa).

This is an uncharacterized protein from Orgyia pseudotsugata (Douglas-fir tussock moth).